A 161-amino-acid chain; its full sequence is Transcriptional repressor NrdR (161 aa).

Positions 1-23 are disordered; sequence MRCPFCGHPDTQVKDSRPAEDGN. A zinc finger lies at 3–34; that stretch reads CPFCGHPDTQVKDSRPAEDGNAIRRRRQCPSC. Positions 11-23 are enriched in basic and acidic residues; that stretch reads TQVKDSRPAEDGN. One can recognise an ATP-cone domain in the interval 49–139; the sequence is LTVMKKSGRR…VYKDFHKVED (91 aa).

The protein belongs to the NrdR family. Requires Zn(2+) as cofactor.

Its function is as follows. Negatively regulates transcription of bacterial ribonucleotide reductase nrd genes and operons by binding to NrdR-boxes. The sequence is that of Transcriptional repressor NrdR from Maricaulis maris (strain MCS10) (Caulobacter maris).